A 138-amino-acid chain; its full sequence is Large ribosomal subunit protein bL19 (138 aa).

The protein belongs to the bacterial ribosomal protein bL19 family.

In terms of biological role, this protein is located at the 30S-50S ribosomal subunit interface and may play a role in the structure and function of the aminoacyl-tRNA binding site. The protein is Large ribosomal subunit protein bL19 of Rickettsia massiliae (strain Mtu5).